A 182-amino-acid chain; its full sequence is Putative manganese efflux pump MntP (182 aa).

6 consecutive transmembrane segments (helical) span residues 6–26, 37–57, 71–91, 101–121, 131–151, and 162–182; these read LIPLIIMAFALGMDAFSVSLG, ILYIGVTIGIFHIIMPFIGMV, HFAGAILLIGLGFYIVYSSIL, IGISLFVFAFGVSIDSFSVGL, VITILLFGFISMLLAWTGLFI, and YGEIVGGIILVGFGLYLLFPI.

This sequence belongs to the MntP (TC 9.B.29) family.

It localises to the cell membrane. Its function is as follows. Probably functions as a manganese efflux pump. In Bacillus cereus (strain Q1), this protein is Putative manganese efflux pump MntP.